The following is a 245-amino-acid chain: UPF0246 protein Ldb2075 (245 aa).

It belongs to the UPF0246 family.

This chain is UPF0246 protein Ldb2075, found in Lactobacillus delbrueckii subsp. bulgaricus (strain ATCC 11842 / DSM 20081 / BCRC 10696 / JCM 1002 / NBRC 13953 / NCIMB 11778 / NCTC 12712 / WDCM 00102 / Lb 14).